Consider the following 720-residue polypeptide: Calcium/calmodulin-dependent protein kinase type II (720 aa).

The Protein kinase domain maps to 12-269 (YDVKEELGKG…ADQALKVPWI (258 aa)). ATP is bound by residues 18-26 (LGKGAFSVV) and Lys-41. The active-site Proton acceptor is the Asp-134. Thr-284 carries the phosphothreonine; by autocatalysis modification. Disordered regions lie at residues 317 to 345 (SDST…QPTS) and 504 to 586 (DNLS…NLSA). Composition is skewed to polar residues over residues 504-514 (DNLSASTSSDL) and 526-540 (PPST…SQTI). Residues 569-586 (SSSNSSTASKSSSTNLSA) are compositionally biased toward low complexity.

Belongs to the protein kinase superfamily. CAMK Ser/Thr protein kinase family. CaMK subfamily. As to quaternary structure, dodecamer. Subunits are tightly packed around a central ring-shaped scaffold with extensive contacts between the regulatory segment of one kinase and the catalytic domain of another enabling cooperative activation of a subunit by the adjacent molecule. Interacts with and phosphorylates daf-16; the interaction promotes daf-16 nuclear localization. Interacts with egl-2 and tir-1. Interacts with nsy-1. It depends on Mg(2+) as a cofactor. Expressed in the nervous system. Observed in the ADF and AWC neurons. Position in AWC neurons is regulated by microtubules. Localized to clusters in ventral cord neurites which appear to be required for glr-1 trafficking. Also present in oocytes.

The protein localises to the cytoplasm. Its subcellular location is the cell projection. It localises to the axon. The protein resides in the perikaryon. It catalyses the reaction L-seryl-[protein] + ATP = O-phospho-L-seryl-[protein] + ADP + H(+). The catalysed reaction is L-threonyl-[protein] + ATP = O-phospho-L-threonyl-[protein] + ADP + H(+). With respect to regulation, ca2(+)/calmodulin binding removes an autoinhibitory regulatory segment located C-terminal to the kinase domain. This releases the catalytic activity of the enzyme and makes accessible a regulatory residue Thr-284. Phosphorylation of Thr-284 by another kinase domain within the oligomeric holoenzyme keeps CaMKII active in the absence of Ca(2+)/calmodulin by preventing the rebinding of the regulatory segment to the kinase domain and by increasing the affinity of calmodulin for the enzyme. Can respond to high-frequency Ca(2+) pulses to become Ca(2+) independent. Functionally, acts in the signaling of a variety of pathways and processes. Phosphorylates 'Ser-319' of daf-16 in response to stress signals, such as heat, starvation and oxidation, which plays a role in prolonging lifespan. Required for viability under chronic osmotic stress in which it acts downstream of osr-1. Has roles in locomotion, oocyte maturation, brood size, egg laying, defecation, meiotic maturation and neuronal cell fate specification. Required for the regulation of synaptic density and neuromuscular junction morphology. Regulates the synaptic trafficking of glr-1. Bidirectional modulator of neurotransmitter release with negative modulatory effects mainly mediated via slo-1 activation. Involved in activation of ADF neurons and increased tph-1 transcription following exposure to pathogenic bacteria which leads to learned olfactory aversion to the bacteria. Implicated in the muscle regulation of spicule protraction. In conjunction with egl-2 has a role in the suppression of mating behavior under food deprivation to encourage foraging. Involved in restricting str-2 expression to only one of the two AWC neurons. May suppress the functional response to an internal pacemaker, perhaps by modulating the activity of the IP3 receptor. In Caenorhabditis elegans, this protein is Calcium/calmodulin-dependent protein kinase type II (unc-43).